We begin with the raw amino-acid sequence, 832 residues long: Spindle pole body component alp6 (832 aa).

Residues 1-186 (MSEIHVKTAL…STETSSVQHT (186 aa)) are interaction with mzt1. Residue T286 is modified to Phosphothreonine.

This sequence belongs to the TUBGCP family. Part of the gamma-tubulin complex. Interacts directly with mzt1. Interacts with mto1. Interacts with mto2.

It localises to the cytoplasm. The protein resides in the cytoskeleton. It is found in the microtubule organizing center. The protein localises to the spindle pole body. Functionally, component of the gamma tubule complex that is required for the regulation of both interphase microtubules and mitotic bipolar spindles. The sequence is that of Spindle pole body component alp6 (alp6) from Schizosaccharomyces pombe (strain 972 / ATCC 24843) (Fission yeast).